The chain runs to 505 residues: Trans-cinnamate 4-monooxygenase (505 aa).

A helical membrane pass occupies residues 3–23 (LLLVEKTLLALFAAIIASIFI). Residues 213–218 (RSRLAQ) and A306 each bind (E)-cinnamate. A heme-binding site is contributed by C447.

This sequence belongs to the cytochrome P450 family. The cofactor is heme.

It is found in the membrane. The enzyme catalyses (E)-cinnamate + reduced [NADPH--hemoprotein reductase] + O2 = (E)-4-coumarate + oxidized [NADPH--hemoprotein reductase] + H2O + H(+). Its pathway is phenylpropanoid metabolism; trans-4-coumarate biosynthesis; trans-4-coumarate from trans-cinnamate: step 1/1. Its function is as follows. Catalyzes the first oxidative step of the phenylpropanoid pathway in higher plants by transforming trans-cinnamate into p-coumarate. The compounds formed by this pathway are essential components for lignification, pollination, and defense against ultraviolet light, predators and pathogens. In Zinnia elegans (Garden zinnia), this protein is Trans-cinnamate 4-monooxygenase (CYP73A12).